A 361-amino-acid chain; its full sequence is Nicotinate-nucleotide--dimethylbenzimidazole phosphoribosyltransferase (361 aa).

The active-site Proton acceptor is the E314.

Belongs to the CobT family.

It carries out the reaction 5,6-dimethylbenzimidazole + nicotinate beta-D-ribonucleotide = alpha-ribazole 5'-phosphate + nicotinate + H(+). Its pathway is nucleoside biosynthesis; alpha-ribazole biosynthesis; alpha-ribazole from 5,6-dimethylbenzimidazole: step 1/2. Functionally, catalyzes the synthesis of alpha-ribazole-5'-phosphate from nicotinate mononucleotide (NAMN) and 5,6-dimethylbenzimidazole (DMB). This Mycobacterium bovis (strain BCG / Pasteur 1173P2) protein is Nicotinate-nucleotide--dimethylbenzimidazole phosphoribosyltransferase.